The primary structure comprises 477 residues: Glutamate--tRNA ligase (477 aa).

The 'HIGH' region motif lies at 8–18 (PSPTGTLHIGT). The 'KMSKS' region motif lies at 247–251 (KLSKR). ATP is bound at residue lysine 250.

This sequence belongs to the class-I aminoacyl-tRNA synthetase family. Glutamate--tRNA ligase type 1 subfamily. As to quaternary structure, monomer.

The protein resides in the cytoplasm. It carries out the reaction tRNA(Glu) + L-glutamate + ATP = L-glutamyl-tRNA(Glu) + AMP + diphosphate. Its function is as follows. Catalyzes the attachment of glutamate to tRNA(Glu) in a two-step reaction: glutamate is first activated by ATP to form Glu-AMP and then transferred to the acceptor end of tRNA(Glu). The sequence is that of Glutamate--tRNA ligase from Parasynechococcus marenigrum (strain WH8102).